The chain runs to 500 residues: L-arabinose isomerase (500 aa).

4 residues coordinate Mn(2+): Glu-306, Glu-333, His-350, and His-450.

It belongs to the arabinose isomerase family. As to quaternary structure, homohexamer. The cofactor is Mn(2+).

It carries out the reaction beta-L-arabinopyranose = L-ribulose. It participates in carbohydrate degradation; L-arabinose degradation via L-ribulose; D-xylulose 5-phosphate from L-arabinose (bacterial route): step 1/3. In terms of biological role, catalyzes the conversion of L-arabinose to L-ribulose. In Shigella flexneri, this protein is L-arabinose isomerase.